Here is a 436-residue protein sequence, read N- to C-terminus: Phosphomethylpyrimidine synthase (436 aa).

Substrate is bound by residues asparagine 68, methionine 97, tyrosine 126, histidine 166, serine 188 to glycine 190, aspartate 229 to arginine 232, and glutamate 268. Histidine 272 contacts Zn(2+). Tyrosine 295 lines the substrate pocket. A Zn(2+)-binding site is contributed by histidine 336. The [4Fe-4S] cluster site is built by cysteine 412, cysteine 415, and cysteine 419.

Belongs to the ThiC family. Homodimer. Requires [4Fe-4S] cluster as cofactor.

It catalyses the reaction 5-amino-1-(5-phospho-beta-D-ribosyl)imidazole + S-adenosyl-L-methionine = 4-amino-2-methyl-5-(phosphooxymethyl)pyrimidine + CO + 5'-deoxyadenosine + formate + L-methionine + 3 H(+). It participates in cofactor biosynthesis; thiamine diphosphate biosynthesis. In terms of biological role, catalyzes the synthesis of the hydroxymethylpyrimidine phosphate (HMP-P) moiety of thiamine from aminoimidazole ribotide (AIR) in a radical S-adenosyl-L-methionine (SAM)-dependent reaction. The chain is Phosphomethylpyrimidine synthase from Geobacter metallireducens (strain ATCC 53774 / DSM 7210 / GS-15).